Here is a 180-residue protein sequence, read N- to C-terminus: Cell division protein SepF (180 aa).

The tract at residues 1-66 (MAFSFKSFFG…NRNGFAYDNG (66 aa)) is disordered. The segment covering 12–23 (ADDEEEEYEDSG) has biased composition (acidic residues). Positions 24–57 (YEQQPNQGQQQPVNSQQQNTSNQSYSGYNNQNQN) are enriched in low complexity.

It belongs to the SepF family. Homodimer. Interacts with FtsZ.

It localises to the cytoplasm. Cell division protein that is part of the divisome complex and is recruited early to the Z-ring. Probably stimulates Z-ring formation, perhaps through the cross-linking of FtsZ protofilaments. Its function overlaps with FtsA. The chain is Cell division protein SepF from Oenococcus oeni (strain ATCC BAA-331 / PSU-1).